We begin with the raw amino-acid sequence, 137 residues long: NADH-quinone oxidoreductase subunit A (137 aa).

A run of 3 helical transmembrane segments spans residues 12–32 (WGFA…LGLS), 66–86 (FYLV…LFAW), and 95–115 (WTGF…LVYL).

This sequence belongs to the complex I subunit 3 family. NDH-1 is composed of 13 different subunits. Subunits NuoA, H, J, K, L, M, N constitute the membrane sector of the complex.

It localises to the cell inner membrane. The catalysed reaction is a quinone + NADH + 5 H(+)(in) = a quinol + NAD(+) + 4 H(+)(out). Functionally, NDH-1 shuttles electrons from NADH, via FMN and iron-sulfur (Fe-S) centers, to quinones in the respiratory chain. The immediate electron acceptor for the enzyme in this species is believed to be ubiquinone. Couples the redox reaction to proton translocation (for every two electrons transferred, four hydrogen ions are translocated across the cytoplasmic membrane), and thus conserves the redox energy in a proton gradient. The chain is NADH-quinone oxidoreductase subunit A from Pseudomonas savastanoi pv. phaseolicola (strain 1448A / Race 6) (Pseudomonas syringae pv. phaseolicola (strain 1448A / Race 6)).